The primary structure comprises 231 residues: Octanoyltransferase (231 aa).

Positions 29–231 (PQDPDLLWLC…GRQLCIWLAP (203 aa)) constitute a BPL/LPL catalytic domain. Substrate contacts are provided by residues 68-75 (RGGQVTFH), 164-166 (ALG), and 177-179 (GVA). The active-site Acyl-thioester intermediate is Cys195.

Belongs to the LipB family.

Its subcellular location is the cytoplasm. It catalyses the reaction octanoyl-[ACP] + L-lysyl-[protein] = N(6)-octanoyl-L-lysyl-[protein] + holo-[ACP] + H(+). The protein operates within protein modification; protein lipoylation via endogenous pathway; protein N(6)-(lipoyl)lysine from octanoyl-[acyl-carrier-protein]: step 1/2. Functionally, catalyzes the transfer of endogenously produced octanoic acid from octanoyl-acyl-carrier-protein onto the lipoyl domains of lipoate-dependent enzymes. Lipoyl-ACP can also act as a substrate although octanoyl-ACP is likely to be the physiological substrate. The chain is Octanoyltransferase from Verminephrobacter eiseniae (strain EF01-2).